The following is a 357-amino-acid chain: Cobalt-precorrin-5B C(1)-methyltransferase (357 aa).

The protein belongs to the CbiD family.

It catalyses the reaction Co-precorrin-5B + S-adenosyl-L-methionine = Co-precorrin-6A + S-adenosyl-L-homocysteine. It participates in cofactor biosynthesis; adenosylcobalamin biosynthesis; cob(II)yrinate a,c-diamide from sirohydrochlorin (anaerobic route): step 6/10. Catalyzes the methylation of C-1 in cobalt-precorrin-5B to form cobalt-precorrin-6A. The protein is Cobalt-precorrin-5B C(1)-methyltransferase of Gloeobacter violaceus (strain ATCC 29082 / PCC 7421).